We begin with the raw amino-acid sequence, 193 residues long: Putative histone H2B type 2-C (193 aa).

The span at Met-1–Lys-12 shows a compositional bias: low complexity. A disordered region spans residues Met-1 to Ser-33. The residue at position 2 (Pro-2) is an N-acetylproline. N6-(2-hydroxyisobutyryl)lysine; alternate is present on Lys-6. Lys-6 and Lys-12 each carry N6-(beta-hydroxybutyryl)lysine; alternate. 3 positions are modified to N6-acetyllysine; alternate: Lys-6, Lys-12, and Lys-13. N6-butyryllysine; alternate is present on Lys-6. N6-crotonyllysine; alternate occurs at positions 6, 12, and 13. Residues Lys-6 and Lys-12 each carry the N6-lactoyllysine; alternate modification. Lys-6 participates in a covalent cross-link: Glycyl lysine isopeptide (Lys-Gly) (interchain with G-Cter in SUMO2); alternate. Lys-13 carries the post-translational modification N6-(2-hydroxyisobutyryl)lysine; alternate. Ser-15 is modified (phosphoserine; by STK4/MST1). An N6-acetyllysine; alternate mark is found at Lys-16, Lys-17, Lys-21, and Lys-24. An N6-crotonyllysine; alternate mark is found at Lys-16, Lys-17, Lys-21, and Lys-24. 4 positions are modified to N6-lactoyllysine; alternate: Lys-16, Lys-17, Lys-21, and Lys-24. An N6-(beta-hydroxybutyryl)lysine; alternate mark is found at Lys-17 and Lys-21. N6-glutaryllysine; alternate is present on Lys-17. N6-(2-hydroxyisobutyryl)lysine; alternate occurs at positions 21 and 24. Lys-21 carries the post-translational modification N6-butyryllysine; alternate. A Glycyl lysine isopeptide (Lys-Gly) (interchain with G-Cter in SUMO2); alternate cross-link involves residue Lys-21. The residue at position 25 (Lys-25) is an N6-(2-hydroxyisobutyryl)lysine. An N6-(2-hydroxyisobutyryl)lysine; alternate modification is found at Lys-35. N6-(beta-hydroxybutyryl)lysine; alternate is present on Lys-35. Lys-35 is subject to N6-crotonyllysine; alternate. Lys-35 bears the N6-glutaryllysine; alternate mark. Lys-35 is subject to N6-succinyllysine; alternate. A Glycyl lysine isopeptide (Lys-Gly) (interchain with G-Cter in ubiquitin); alternate cross-link involves residue Lys-35. At Ser-37 the chain carries Phosphoserine; by AMPK. An N6-(2-hydroxyisobutyryl)lysine; alternate mark is found at Lys-44, Lys-47, and Lys-58. Residue Lys-44 is modified to N6-lactoyllysine; alternate. Residues Lys-44 and Lys-47 each carry the N6-glutaryllysine; alternate modification. Lys-47 carries the N6-methyllysine; alternate modification. Lys-58 is modified (N6,N6-dimethyllysine; alternate). The residue at position 80 (Arg-80) is a Dimethylated arginine. Lys-86 carries the N6-(2-hydroxyisobutyryl)lysine; alternate modification. Lys-86 carries the N6-(beta-hydroxybutyryl)lysine; alternate modification. Lys-86 carries the N6-acetyllysine; alternate modification. Position 86 is an N6-lactoyllysine; alternate (Lys-86). Residue Lys-86 is modified to N6,N6,N6-trimethyllysine; alternate. Residues Arg-87 and Arg-93 each carry the omega-N-methylarginine modification. A disordered region spans residues Pro-111–Ser-136.

The protein belongs to the histone H2B family. As to quaternary structure, the nucleosome is a histone octamer containing two molecules each of H2A, H2B, H3 and H4 assembled in one H3-H4 heterotetramer and two H2A-H2B heterodimers. The octamer wraps approximately 147 bp of DNA. Post-translationally, phosphorylation at Ser-37 (H2BS36ph) by AMPK in response to stress promotes transcription. Phosphorylated on Ser-15 (H2BS14ph) by STK4/MST1 during apoptosis; which facilitates apoptotic chromatin condensation. Also phosphorylated on Ser-15 in response to DNA double strand breaks (DSBs), and in correlation with somatic hypermutation and immunoglobulin class-switch recombination. In terms of processing, crotonylation (Kcr) is specifically present in male germ cells and marks testis-specific genes in post-meiotic cells, including X-linked genes that escape sex chromosome inactivation in haploid cells. Crotonylation marks active promoters and enhancers and confers resistance to transcriptional repressors. It is also associated with post-meiotically activated genes on autosomes. Lactylated in macrophages by EP300/P300 by using lactoyl-CoA directly derived from endogenous or exogenous lactate, leading to stimulates gene transcription.

The protein resides in the nucleus. It is found in the chromosome. Core component of nucleosome. Nucleosomes wrap and compact DNA into chromatin, limiting DNA accessibility to the cellular machineries which require DNA as a template. Histones thereby play a central role in transcription regulation, DNA repair, DNA replication and chromosomal stability. DNA accessibility is regulated via a complex set of post-translational modifications of histones, also called histone code, and nucleosome remodeling. This chain is Putative histone H2B type 2-C, found in Homo sapiens (Human).